The following is a 926-amino-acid chain: Glycogenin (926 aa).

UDP-binding residues include L10, T12, Y16, and R85. UDP-alpha-D-glucose is bound by residues L10, T12, Y16, R85, K94, D111, A112, D113, N145, S146, D184, D187, and Q188. The UDP site is built by D111, A112, and D113. Position 111 (D111) interacts with Mn(2+). Residue D113 participates in Mn(2+) binding. Residue Y219 is glycosylated (O-linked (Glc...) tyrosine). 3 residues coordinate UDP: H236, G239, and K242. Residue H236 participates in Mn(2+) binding. Positions 239 and 242 each coordinate UDP-alpha-D-glucose. 5 disordered regions span residues 379 to 432 (PSVS…PEMS), 452 to 476 (YYAH…LPKE), 547 to 584 (SIQN…PPRH), 611 to 749 (MSGK…ETVQ), and 768 to 903 (LPHA…PNTD). Over residues 386–402 (LTPPPADAAPAPAPAPV) the composition is skewed to pro residues. The span at 404–413 (TQTEQKTAQP) shows a compositional bias: polar residues. The span at 456 to 469 (PESHRPATEHKEPE) shows a compositional bias: basic and acidic residues. The segment covering 557-566 (AHSQHQSHAT) has biased composition (low complexity). The segment covering 655–683 (SLHSLQSVPGTPRTQYSTFGKSPRLTNAR) has biased composition (polar residues). Over residues 692–704 (EQPEDSADGDDEN) the composition is skewed to acidic residues. Basic and acidic residues predominate over residues 733–745 (DRWAQTDRVKTVD). Residues 788-798 (SGNGRAGGGGQ) show a composition bias toward gly residues. Residues 800–812 (EAQTQHQSTYYEY) show a composition bias toward polar residues. Low complexity-rich tracts occupy residues 813–824 (QQQHPHSQQSRQ) and 851–875 (HAQG…NPNL).

It belongs to the glycosyltransferase 8 family. Glycogenin subfamily. The cofactor is Mn(2+).

Its subcellular location is the cytoplasm. It localises to the vacuole. It carries out the reaction L-tyrosyl-[glycogenin] + UDP-alpha-D-glucose = alpha-D-glucosyl-L-tyrosyl-[glycogenin] + UDP + H(+). It catalyses the reaction [1,4-alpha-D-glucosyl](n)-L-tyrosyl-[glycogenin] + UDP-alpha-D-glucose = [1,4-alpha-D-glucosyl](n+1)-L-tyrosyl-[glycogenin] + UDP + H(+). Its function is as follows. Self-glucosylating initiator of glycogen synthesis. It catalyzes the formation of a short alpha (1,4)-glucosyl chain covalently attached via a glucose 1-O-tyrosyl linkage to internal tyrosine residues and these chains act as primers for the elongation reaction catalyzed by glycogen synthase. In Cryptococcus neoformans var. grubii serotype A (strain H99 / ATCC 208821 / CBS 10515 / FGSC 9487) (Filobasidiella neoformans var. grubii), this protein is Glycogenin.